We begin with the raw amino-acid sequence, 86 residues long: Putative antitoxin VapB5 (86 aa).

It belongs to the phD/YefM antitoxin family. In terms of assembly, forms a complex with VapC5.

Its function is as follows. Probable antitoxin component of a probable type II toxin-antitoxin (TA) system. The cognate toxin is VapC5. This Mycobacterium tuberculosis (strain CDC 1551 / Oshkosh) protein is Putative antitoxin VapB5 (vapB5).